We begin with the raw amino-acid sequence, 152 residues long: Ribosomal RNA large subunit methyltransferase H (152 aa).

S-adenosyl-L-methionine-binding positions include Leu68, Gly100, and 119–124; that span reads LGVMTW.

It belongs to the RNA methyltransferase RlmH family. Homodimer.

It is found in the cytoplasm. It catalyses the reaction pseudouridine(1915) in 23S rRNA + S-adenosyl-L-methionine = N(3)-methylpseudouridine(1915) in 23S rRNA + S-adenosyl-L-homocysteine + H(+). In terms of biological role, specifically methylates the pseudouridine at position 1915 (m3Psi1915) in 23S rRNA. The protein is Ribosomal RNA large subunit methyltransferase H of Rhodospirillum rubrum (strain ATCC 11170 / ATH 1.1.1 / DSM 467 / LMG 4362 / NCIMB 8255 / S1).